A 137-amino-acid polypeptide reads, in one-letter code: Cucumber peeling cupredoxin (137 aa).

Gln1 bears the Pyrrolidone carboxylic acid mark. The Phytocyanin domain maps to 3-107; the sequence is TVHIVGDNTG…GQKLSINVVA (105 aa). 4 residues coordinate Cu cation: His46, Cys89, His94, and Gln99. A disulfide bond links Cys60 and Cys95. A glycan (N-linked (GlcNAc...) asparagine) is linked at Asn109. Positions 112-137 are disordered; that stretch reads VSMPPPSSSPPSSVMPPPVMPPPSPS. Residues 114–137 are compositionally biased toward pro residues; sequence MPPPSSSPPSSVMPPPVMPPPSPS. A 4-hydroxyproline; partial modification is found at Pro115. A 4-hydroxyproline mark is found at Pro116, Pro117, Pro121, and Pro122. A 4-hydroxyproline; partial modification is found at Pro127. 4-hydroxyproline is present on residues Pro128, Pro129, Pro133, Pro134, and Pro136.

This is Cucumber peeling cupredoxin from Cucumis sativus (Cucumber).